Consider the following 217-residue polypeptide: Adenylate kinase (217 aa).

10–15 serves as a coordination point for ATP; it reads GAGKGT. Residues 30–59 are NMP; the sequence is STGDMFRAAMKEETQLGLEAKSFIDKGELV. AMP-binding positions include T31, R36, 57 to 59, 85 to 88, and Q92; these read ELV and GFPR. The LID stretch occupies residues 126–163; sequence GRRICKNCGATYHLVFNPPAKENVCDKCGGELYQRADD. R127 contributes to the ATP binding site. Zn(2+) contacts are provided by C130 and C133. 136–137 provides a ligand contact to ATP; that stretch reads TY. C150 and C153 together coordinate Zn(2+). R160 and R171 together coordinate AMP. Position 199 (K199) interacts with ATP.

It belongs to the adenylate kinase family. Monomer.

Its subcellular location is the cytoplasm. It catalyses the reaction AMP + ATP = 2 ADP. It participates in purine metabolism; AMP biosynthesis via salvage pathway; AMP from ADP: step 1/1. Its function is as follows. Catalyzes the reversible transfer of the terminal phosphate group between ATP and AMP. Plays an important role in cellular energy homeostasis and in adenine nucleotide metabolism. The polypeptide is Adenylate kinase (Bacillus pumilus (strain SAFR-032)).